Reading from the N-terminus, the 500-residue chain is Galactose/methyl galactoside import ATP-binding protein MglA (500 aa).

2 ABC transporter domains span residues 8 to 243 (LEME…VGRD) and 257 to 500 (EMIL…AKYL). An ATP-binding site is contributed by 40–47 (GENGAGKS).

It belongs to the ABC transporter superfamily. Galactose/methyl galactoside importer (TC 3.A.1.2.3) family. The complex is composed of one ATP-binding protein (MglA), two transmembrane proteins (MglC) and a solute-binding protein (MglB).

It is found in the cell inner membrane. It catalyses the reaction D-galactose(out) + ATP + H2O = D-galactose(in) + ADP + phosphate + H(+). The enzyme catalyses methyl beta-D-galactoside(out) + ATP + H2O = methyl beta-D-galactoside(in) + ADP + phosphate + H(+). Its function is as follows. Part of the ABC transporter complex MglABC involved in galactose/methyl galactoside import. Responsible for energy coupling to the transport system. This chain is Galactose/methyl galactoside import ATP-binding protein MglA, found in Fusobacterium nucleatum subsp. nucleatum (strain ATCC 25586 / DSM 15643 / BCRC 10681 / CIP 101130 / JCM 8532 / KCTC 2640 / LMG 13131 / VPI 4355).